Here is a 274-residue protein sequence, read N- to C-terminus: NADPH-dependent 7-cyano-7-deazaguanine reductase (274 aa).

80–82 is a substrate binding site; the sequence is VES. 82–83 contacts NADPH; that stretch reads SK. Cysteine 181 serves as the catalytic Thioimide intermediate. Aspartate 188 serves as the catalytic Proton donor. 220 to 221 contributes to the substrate binding site; that stretch reads HE. Position 249-250 (249-250) interacts with NADPH; it reads RG.

The protein belongs to the GTP cyclohydrolase I family. QueF type 2 subfamily. Homodimer.

It is found in the cytoplasm. It carries out the reaction 7-aminomethyl-7-carbaguanine + 2 NADP(+) = 7-cyano-7-deazaguanine + 2 NADPH + 3 H(+). It functions in the pathway tRNA modification; tRNA-queuosine biosynthesis. Its function is as follows. Catalyzes the NADPH-dependent reduction of 7-cyano-7-deazaguanine (preQ0) to 7-aminomethyl-7-deazaguanine (preQ1). This is NADPH-dependent 7-cyano-7-deazaguanine reductase from Burkholderia multivorans (strain ATCC 17616 / 249).